Consider the following 336-residue polypeptide: tRNA(Ile)-lysidine synthase (336 aa).

40 to 45 (SGGQDS) is an ATP binding site.

This sequence belongs to the tRNA(Ile)-lysidine synthase family.

It localises to the cytoplasm. The catalysed reaction is cytidine(34) in tRNA(Ile2) + L-lysine + ATP = lysidine(34) in tRNA(Ile2) + AMP + diphosphate + H(+). Its function is as follows. Ligates lysine onto the cytidine present at position 34 of the AUA codon-specific tRNA(Ile) that contains the anticodon CAU, in an ATP-dependent manner. Cytidine is converted to lysidine, thus changing the amino acid specificity of the tRNA from methionine to isoleucine. This Prochlorococcus marinus subsp. pastoris (strain CCMP1986 / NIES-2087 / MED4) protein is tRNA(Ile)-lysidine synthase.